A 365-amino-acid polypeptide reads, in one-letter code: GTPase Obg (365 aa).

Residues 2 to 160 form the Obg domain; it reads ESFVDEVAIE…KFLRLSLKLL (159 aa). An OBG-type G domain is found at 161 to 329; it reads ADVGIVGLPN…LLEAMDEAFF (169 aa). GTP-binding positions include 167 to 174, 192 to 196, 215 to 218, 282 to 285, and 310 to 312; these read GLPNAGKS, FTTLS, DIPG, NKID, and SAD. Ser174 and Thr194 together coordinate Mg(2+).

It belongs to the TRAFAC class OBG-HflX-like GTPase superfamily. OBG GTPase family. As to quaternary structure, monomer. Mg(2+) serves as cofactor.

The protein resides in the cytoplasm. An essential GTPase which binds GTP, GDP and possibly (p)ppGpp with moderate affinity, with high nucleotide exchange rates and a fairly low GTP hydrolysis rate. Plays a role in control of the cell cycle, stress response, ribosome biogenesis and in those bacteria that undergo differentiation, in morphogenesis control. In Leptospira borgpetersenii serovar Hardjo-bovis (strain JB197), this protein is GTPase Obg.